Here is a 199-residue protein sequence, read N- to C-terminus: MKSGLWYFFLFCLRIKVLTGEINGSANYEMFIFHNGGVQILCKYPDIVQQFKMQLLKGGQILCDLTKTKGSGNTVSIKSLKFCHSQLSNNSVSFFLYNLDHSHANYYFCNLSIFDPPPFKVTLTGGYLHIYESQLCCQLKFWLPIGCAAFVVVCILGCILICWLTKKKYSSSVHDPNGEYMFMRAVNTAKKSRLTDVTL.

Positions Met-1–Gly-20 are cleaved as a signal peptide. The Extracellular portion of the chain corresponds to Glu-21–Lys-140. In terms of domain architecture, Ig-like V-type spans Met-30–Glu-132. 2 disulfide bridges follow: Cys-42–Cys-109 and Cys-63–Cys-83. N-linked (GlcNAc...) asparagine glycosylation is found at Asn-89 and Asn-110. The chain crosses the membrane as a helical span at residues Phe-141–Ile-161. Residues Cys-162–Leu-199 lie on the Cytoplasmic side of the membrane.

As to quaternary structure, homodimer; disulfide-linked. Interacts with ICOSLG. Interacts with PIK3R1. Interacts with TBK1; this interaction is critical for the maturation of T follicular regulatory cells. In terms of processing, N-glycosylated. In terms of tissue distribution, activated T-cells. Highly expressed on tonsillar T-cells, which are closely associated with B-cells in the apical light zone of germinal centers, the site of terminal B-cell maturation. Expressed at lower levels in thymus, lung, lymph node and peripheral blood leukocytes. Expressed in the medulla of fetal and newborn thymus.

The protein resides in the cell membrane. It localises to the secreted. In terms of biological role, stimulatory receptor expressed in activated or antigen-experienced T-cells that plays an important role in the immune response. Upon binding to its ligand ICOSL expressed on antigen presenting cells (APCs), delivers costimulatory signals that enhances all basic T-cell responses to a foreign antigen, namely proliferation, secretion of lymphokines including IL10, up-regulation of molecules that mediate cell-cell interaction, and effective help for antibody secretion by B-cells. Also acts as a costimulatory receptor critical for the differentiation of T follicular regulatory cells upon immune challenges such as viral infection. Mechanistically, potentiates TCR-induced calcium flux by augmenting PLCG1 activation and actin remodeling. In addition, activates PI3K signaling pathways independently of calcium flux. Essential both for efficient interaction between T and B-cells and for normal antibody responses to T-cell dependent antigens. Prevents the apoptosis of pre-activated T-cells. Plays a critical role in CD40-mediated class switching of immunoglobin isotypes. This chain is Inducible T-cell costimulator (ICOS), found in Homo sapiens (Human).